A 196-amino-acid chain; its full sequence is Transmembrane protein 126A (196 aa).

Residues Met-1–Glu-34 lie on the Mitochondrial matrix side of the membrane. Residues His-35–Phe-55 traverse the membrane as a helical segment. The Mitochondrial intermembrane segment spans residues Arg-56 to Arg-57. The helical transmembrane segment at Ile-58–Leu-78 threads the bilayer. Residues Thr-79 to Ser-107 lie on the Mitochondrial matrix side of the membrane. A helical membrane pass occupies residues Gly-108–Gly-128. Over Gly-129–Lys-159 the chain is Mitochondrial intermembrane. The chain crosses the membrane as a helical span at residues Met-160–Ser-176. At Glu-177–His-196 the chain is on the mitochondrial matrix side.

It belongs to the TMEM126 family. In terms of assembly, interacts with OXA1L; promoting cotranslational quality control in mitochondria.

Its subcellular location is the mitochondrion inner membrane. Protein required for the cotranslational protein quality control in the inner membrane of the mitochondria. Associates with newly synthesized polypeptides and may act as a chaperone that cooperates with OXA1L for the insertion of newly synthesized mitochondrial proteins into the inner membrane. Required for the assembly of the ND4 module of mitochondrial complex I. The sequence is that of Transmembrane protein 126A (TMEM126A) from Pongo abelii (Sumatran orangutan).